A 488-amino-acid polypeptide reads, in one-letter code: Glutamyl-tRNA(Gln) amidotransferase subunit A (488 aa).

Residues K77 and S152 each act as charge relay system in the active site. The active-site Acyl-ester intermediate is S176.

The protein belongs to the amidase family. GatA subfamily. As to quaternary structure, heterotrimer of A, B and C subunits.

The enzyme catalyses L-glutamyl-tRNA(Gln) + L-glutamine + ATP + H2O = L-glutaminyl-tRNA(Gln) + L-glutamate + ADP + phosphate + H(+). Allows the formation of correctly charged Gln-tRNA(Gln) through the transamidation of misacylated Glu-tRNA(Gln) in organisms which lack glutaminyl-tRNA synthetase. The reaction takes place in the presence of glutamine and ATP through an activated gamma-phospho-Glu-tRNA(Gln). The chain is Glutamyl-tRNA(Gln) amidotransferase subunit A from Streptococcus pneumoniae (strain ATCC 700669 / Spain 23F-1).